The sequence spans 486 residues: tRNA sulfurtransferase (486 aa).

The THUMP domain occupies 61–165; sequence AILIDVLGRI…NDHMMLIKAR (105 aa). Residues 183–184, lysine 265, glycine 287, and glutamine 296 each bind ATP; that span reads LI. The cysteines at positions 344 and 456 are disulfide-linked. Residues 404–481 enclose the Rhodanese domain; the sequence is LSANDVILDI…NGFANVRVFA (78 aa). Cysteine 456 serves as the catalytic Cysteine persulfide intermediate.

It belongs to the ThiI family.

Its subcellular location is the cytoplasm. The catalysed reaction is [ThiI sulfur-carrier protein]-S-sulfanyl-L-cysteine + a uridine in tRNA + 2 reduced [2Fe-2S]-[ferredoxin] + ATP + H(+) = [ThiI sulfur-carrier protein]-L-cysteine + a 4-thiouridine in tRNA + 2 oxidized [2Fe-2S]-[ferredoxin] + AMP + diphosphate. It carries out the reaction [ThiS sulfur-carrier protein]-C-terminal Gly-Gly-AMP + S-sulfanyl-L-cysteinyl-[cysteine desulfurase] + AH2 = [ThiS sulfur-carrier protein]-C-terminal-Gly-aminoethanethioate + L-cysteinyl-[cysteine desulfurase] + A + AMP + 2 H(+). The protein operates within cofactor biosynthesis; thiamine diphosphate biosynthesis. Its function is as follows. Catalyzes the ATP-dependent transfer of a sulfur to tRNA to produce 4-thiouridine in position 8 of tRNAs, which functions as a near-UV photosensor. Also catalyzes the transfer of sulfur to the sulfur carrier protein ThiS, forming ThiS-thiocarboxylate. This is a step in the synthesis of thiazole, in the thiamine biosynthesis pathway. The sulfur is donated as persulfide by IscS. This is tRNA sulfurtransferase from Mannheimia succiniciproducens (strain KCTC 0769BP / MBEL55E).